Consider the following 335-residue polypeptide: MSKMTNDLEKIRGGVHIAVQGYEVDRITEVPIMRRAEKVYLICKPGNNDSKRGKAFKNVIIKKFEEKRVNYEIVEADLFDLDDIVKKMKLIIAHERKEFGDVKFYINVSSGSTIGCIAGITCAMILNKENSRIIPYYVMPEKSLDGLSEKEKEELKKEYESKYNCPYLPRSFGVRGVKLIYPFEVTLPREELLIFLKFIGRAGNRGLTIKELSILTKEEFLNVDLNDNESIKELIKAVERKESVSNSSVKKMKNLVRELKEVVGSDVDDLKKIITWRKKCRSSVSSTGQSDLVWVNKNVVEKLLELELIEKPEKIGKSKYIRISEKGKMLLNYVG.

This is an uncharacterized protein from Methanocaldococcus jannaschii (strain ATCC 43067 / DSM 2661 / JAL-1 / JCM 10045 / NBRC 100440) (Methanococcus jannaschii).